The following is a 235-amino-acid chain: Large ribosomal subunit protein uL1 (235 aa).

Belongs to the universal ribosomal protein uL1 family. Part of the 50S ribosomal subunit.

Functionally, binds directly to 23S rRNA. The L1 stalk is quite mobile in the ribosome, and is involved in E site tRNA release. In terms of biological role, protein L1 is also a translational repressor protein, it controls the translation of the L11 operon by binding to its mRNA. The polypeptide is Large ribosomal subunit protein uL1 (Methylobacterium nodulans (strain LMG 21967 / CNCM I-2342 / ORS 2060)).